The primary structure comprises 455 residues: 3-phosphoshikimate 1-carboxyvinyltransferase (455 aa).

The interval 1–23 (MSHGSNPRPATARKSSDLKGTLR) is disordered. Positions 28, 29, and 33 each coordinate 3-phosphoshikimate. A phosphoenolpyruvate-binding site is contributed by Lys28. Gly100 and Arg128 together coordinate phosphoenolpyruvate. The 3-phosphoshikimate site is built by Ser173, Gln175, Asp326, and Lys353. Residue Gln175 participates in phosphoenolpyruvate binding. Asp326 (proton acceptor) is an active-site residue. Phosphoenolpyruvate contacts are provided by Arg357 and Arg405.

The protein belongs to the EPSP synthase family. In terms of assembly, monomer.

It is found in the cytoplasm. It carries out the reaction 3-phosphoshikimate + phosphoenolpyruvate = 5-O-(1-carboxyvinyl)-3-phosphoshikimate + phosphate. Its pathway is metabolic intermediate biosynthesis; chorismate biosynthesis; chorismate from D-erythrose 4-phosphate and phosphoenolpyruvate: step 6/7. Its function is as follows. Catalyzes the transfer of the enolpyruvyl moiety of phosphoenolpyruvate (PEP) to the 5-hydroxyl of shikimate-3-phosphate (S3P) to produce enolpyruvyl shikimate-3-phosphate and inorganic phosphate. In Rhizobium meliloti (strain 1021) (Ensifer meliloti), this protein is 3-phosphoshikimate 1-carboxyvinyltransferase.